The chain runs to 207 residues: 8-oxoguanine DNA glycosylase/AP lyase (207 aa).

Active-site residues include K128 and D146.

It belongs to the type-2 OGG1 family.

It carries out the reaction 2'-deoxyribonucleotide-(2'-deoxyribose 5'-phosphate)-2'-deoxyribonucleotide-DNA = a 3'-end 2'-deoxyribonucleotide-(2,3-dehydro-2,3-deoxyribose 5'-phosphate)-DNA + a 5'-end 5'-phospho-2'-deoxyribonucleoside-DNA + H(+). Functionally, catalyzes the excision of an oxidatively damaged form of guanine (7,8-dihydro-8-oxoguanine = 8-oxoG) from DNA. Also cleaves the DNA backbone at apurinic/apyrimidinic sites (AP sites). The chain is 8-oxoguanine DNA glycosylase/AP lyase from Saccharolobus solfataricus (strain ATCC 35092 / DSM 1617 / JCM 11322 / P2) (Sulfolobus solfataricus).